The sequence spans 409 residues: Peptidase T (409 aa).

H78 provides a ligand contact to Zn(2+). The active site involves D80. D140 contacts Zn(2+). Catalysis depends on E173, which acts as the Proton acceptor. Residues E174, D196, and H379 each contribute to the Zn(2+) site.

The protein belongs to the peptidase M20B family. It depends on Zn(2+) as a cofactor.

It localises to the cytoplasm. It carries out the reaction Release of the N-terminal residue from a tripeptide.. Cleaves the N-terminal amino acid of tripeptides. This chain is Peptidase T, found in Escherichia coli (strain SE11).